A 357-amino-acid chain; its full sequence is Putative F-box/kelch-repeat protein At5g38680 (357 aa).

Positions 14–61 (NSNPSLPDALIISCIARVSRLYYPILSFVSKSFRSLLASPELYKERSL) constitute an F-box domain. 4 Kelch repeats span residues 131 to 175 (NIYN…VLDG), 177 to 224 (IYVA…SKSL), 226 to 267 (IDEK…YCEI), and 268 to 313 (ENVL…GGKK).

This is Putative F-box/kelch-repeat protein At5g38680 from Arabidopsis thaliana (Mouse-ear cress).